Here is a 348-residue protein sequence, read N- to C-terminus: Small ribosomal subunit biogenesis GTPase RsgA (348 aa).

The disordered stretch occupies residues 1–32 (MAKQKLTQNQKRRIHSNNAKALDRHRRQTKKQ). Positions 106 to 274 (KNELSRPDYY…LIDSPGIREF (169 aa)) constitute a CP-type G domain. Residues 162–165 (NKID) and 216–224 (GQSGVGKSS) each bind GTP. 4 residues coordinate Zn(2+): C298, C303, H305, and C311.

The protein belongs to the TRAFAC class YlqF/YawG GTPase family. RsgA subfamily. Monomer. Associates with 30S ribosomal subunit, binds 16S rRNA. Zn(2+) serves as cofactor.

It is found in the cytoplasm. In terms of biological role, one of several proteins that assist in the late maturation steps of the functional core of the 30S ribosomal subunit. Helps release RbfA from mature subunits. May play a role in the assembly of ribosomal proteins into the subunit. Circularly permuted GTPase that catalyzes slow GTP hydrolysis, GTPase activity is stimulated by the 30S ribosomal subunit. This is Small ribosomal subunit biogenesis GTPase RsgA from Actinobacillus succinogenes (strain ATCC 55618 / DSM 22257 / CCUG 43843 / 130Z).